The following is a 294-amino-acid chain: Nucleophosmin (294 aa).

An N-acetylmethionine modification is found at Met-1. The interval 1–117 (MEDSMDMDMS…PVHISGQHLV (117 aa)) is necessary for interaction with APEX1. Residues 1–186 (MEDSMDMDMS…DDDDFDDEEA (186 aa)) form a required for interaction with SENP3 region. A Phosphoserine; by PLK1 and PLK2 modification is found at Ser-4. Ser-10 carries the phosphoserine modification. Lys-27 is covalently cross-linked (Glycyl lysine isopeptide (Lys-Gly) (interchain with G-Cter in SUMO2)). Lys-32 carries the N6-acetyllysine; alternate modification. Lys-32 participates in a covalent cross-link: Glycyl lysine isopeptide (Lys-Gly) (interchain with G-Cter in SUMO1); alternate. Lys-32 is covalently cross-linked (Glycyl lysine isopeptide (Lys-Gly) (interchain with G-Cter in SUMO2); alternate). A Phosphoserine modification is found at Ser-43. Tyr-67 is modified (phosphotyrosine). At Ser-70 the chain carries Phosphoserine. A phosphothreonine mark is found at Thr-75 and Thr-95. Residues 120–132 (EEDAESEDEEEED) are compositionally biased toward acidic residues. Residues 120-247 (EEDAESEDEE…PKGPSSVEDI (128 aa)) form a disordered region. Residue Ser-125 is modified to Phosphoserine; by CDK2. 2 positions are modified to phosphoserine: Ser-137 and Ser-139. Lys-141 is covalently cross-linked (Glycyl lysine isopeptide (Lys-Gly) (interchain with G-Cter in SUMO2)). Lys-150 is subject to N6-acetyllysine; alternate. Lys-150 participates in a covalent cross-link: Glycyl lysine isopeptide (Lys-Gly) (interchain with G-Cter in SUMO2); alternate. The short motif at 152 to 157 (PQKKVK) is the Nuclear localization signal element. An N6-acetyllysine modification is found at Lys-154. Acidic residues predominate over residues 161–187 (DEDDDDDDEEDDDEDDDDDDFDDEEAE). An interaction with NOP2 region spans residues 187-215 (EEKAPVKKSIRDTPAKNAQKSNQNGKDSK). Over residues 188-200 (EKAPVKKSIRDTP) the composition is skewed to basic and acidic residues. Residues 191 to 197 (PVKKSIR) carry the Nuclear localization signal motif. Thr-199 bears the Phosphothreonine; by CDK1, CDK2 and CDK6 mark. The span at 202-222 (KNAQKSNQNGKDSKPSSTPRS) shows a compositional bias: polar residues. ADP-ribosylserine is present on Ser-207. Lys-212 carries the post-translational modification N6-acetyllysine. Lys-215 participates in a covalent cross-link: Glycyl lysine isopeptide (Lys-Gly) (interchain with G-Cter in SUMO2). A Phosphothreonine; by CDK1 modification is found at Thr-219. Over residues 223–235 (KGQESFKKQEKTP) the composition is skewed to basic and acidic residues. At Ser-227 the chain carries Phosphoserine. Residue Lys-229 is modified to N6-acetyllysine. Position 230 is an N6-acetyllysine; alternate (Lys-230). A Glycyl lysine isopeptide (Lys-Gly) (interchain with G-Cter in SUMO); alternate cross-link involves residue Lys-230. Residues Thr-234 and Thr-237 each carry the phosphothreonine; by CDK1 modification. A phosphoserine mark is found at Ser-242 and Ser-243. The required for nucleolar localization stretch occupies residues 243 to 294 (SVEDIKAKMQASIEKGGSLPKVEAKFINYVKNCFRMTDQEAIQDLWQWRKSL). A Glycyl lysine isopeptide (Lys-Gly) (interchain with G-Cter in SUMO1); alternate cross-link involves residue Lys-248. Glycyl lysine isopeptide (Lys-Gly) (interchain with G-Cter in SUMO2); alternate cross-links involve residues Lys-248 and Lys-250. Lys-250 is subject to N6-acetyllysine; alternate. A Phosphoserine modification is found at Ser-254. Lys-257 bears the N6-acetyllysine; alternate mark. A Glycyl lysine isopeptide (Lys-Gly) (interchain with G-Cter in SUMO1); alternate cross-link involves residue Lys-257. Lys-257 participates in a covalent cross-link: Glycyl lysine isopeptide (Lys-Gly) (interchain with G-Cter in SUMO2); alternate. Lys-257 carries the N6-acetyllysine modification. Ser-260 is modified (phosphoserine). Glycyl lysine isopeptide (Lys-Gly) (interchain with G-Cter in SUMO2); alternate cross-links involve residues Lys-263, Lys-267, and Lys-273. Lys-263 participates in a covalent cross-link: Glycyl lysine isopeptide (Lys-Gly) (interchain with G-Cter in SUMO); alternate. N6-acetyllysine; alternate is present on residues Lys-267 and Lys-273. Lys-267 is covalently cross-linked (Glycyl lysine isopeptide (Lys-Gly) (interchain with G-Cter in SUMO1); alternate). At Lys-267 the chain carries N6-succinyllysine; alternate. Thr-279 carries the post-translational modification Phosphothreonine. Lys-292 bears the N6-acetyllysine mark.

The protein belongs to the nucleoplasmin family. Decamer formed by two pentameric rings associated in a head-to-head fashion. Disulfide-linked dimers under certain conditions. The SWAP complex consists of NPM1, NCL, PARP1 and SWAP70. Interacts with NSUN2 and SENP3. Interacts with the methylated form of RPS10. Interacts (via N-terminal domain) with APEX1; the interaction is RNA-dependent and decreases in hydrogen peroxide-damaged cells. Interacts with isoform 1 of NEK2. Interacts with ROCK2 and BRCA2. Interacts with RPGR. Interacts with CENPW. Interacts with EIF2AK2/PKR. Interacts with CEBPA (isoform 4). Interacts with DDX31; this interaction prevents interaction between NPM1 and HDM2. Interacts with MYC; competitive with NOP53. Interacts with NOP53; the interaction is direct and competitive with MYC. Interacts with LRRC34. Interacts with RRP1B. Interacts with NPM3. Interacts with ALKBH2. Interacts with TTF1 (via C-terminal region). Interacts with NOP2. Interacts with ARID3C (via REKLES DOMAIN); the interaction mediates ARID3C nuclear shuttling. In terms of assembly, (Microbial infection) Interacts with hepatitis delta virus S-HDAg. As to quaternary structure, (Microbial infection) Interacts with HTLV1 Rex protein (via N-terminal nuclear localization signal). Post-translationally, acetylated at C-terminal lysine residues, thereby increasing affinity to histones. ADP-ribosylated. In terms of processing, phosphorylated at Ser-4 by PLK1 and PLK2. Phosphorylation at Ser-4 by PLK2 in S phase is required for centriole duplication and is sufficient to trigger centriole replication. Phosphorylation at Ser-4 by PLK1 takes place during mitosis. Phosphorylated by CDK2 at Ser-125 and Thr-199. Phosphorylation at Thr-199 may trigger initiation of centrosome duplication. Phosphorylated by CDK1 at Thr-199, Thr-219, Thr-234 and Thr-237 during cell mitosis. When these four sites are phosphorated, RNA-binding activity seem to be abolished. May be phosphorylated at Ser-70 by NEK2. The Thr-199 phosphorylated form has higher affinity for ROCK2. CDK6 triggers Thr-199 phosphorylation when complexed to Kaposi's sarcoma herpesvirus (KSHV) V-cyclin, leading to viral reactivation by reducing viral LANA levels. Post-translationally, sumoylated by ARF. Ubiquitinated. Ubiquitination leads to proteasomal degradation. Deubiquitinated by USP36.

It is found in the nucleus. The protein localises to the nucleolus. The protein resides in the nucleoplasm. It localises to the cytoplasm. Its subcellular location is the cytoskeleton. It is found in the microtubule organizing center. The protein localises to the centrosome. Involved in diverse cellular processes such as ribosome biogenesis, centrosome duplication, protein chaperoning, histone assembly, cell proliferation, and regulation of tumor suppressors p53/TP53 and ARF. Binds ribosome presumably to drive ribosome nuclear export. Associated with nucleolar ribonucleoprotein structures and bind single-stranded nucleic acids. Acts as a chaperonin for the core histones H3, H2B and H4. Stimulates APEX1 endonuclease activity on apurinic/apyrimidinic (AP) double-stranded DNA but inhibits APEX1 endonuclease activity on AP single-stranded RNA. May exert a control of APEX1 endonuclease activity within nucleoli devoted to repair AP on rDNA and the removal of oxidized rRNA molecules. In concert with BRCA2, regulates centrosome duplication. Regulates centriole duplication: phosphorylation by PLK2 is able to trigger centriole replication. Negatively regulates the activation of EIF2AK2/PKR and suppresses apoptosis through inhibition of EIF2AK2/PKR autophosphorylation. Antagonizes the inhibitory effect of ATF5 on cell proliferation and relieves ATF5-induced G2/M blockade. In complex with MYC enhances the transcription of MYC target genes. May act as chaperonin or cotransporter in the nucleolar localization of transcription termination factor TTF1. The chain is Nucleophosmin from Homo sapiens (Human).